We begin with the raw amino-acid sequence, 1394 residues long: DNA-directed RNA polymerase subunit beta' (1394 aa).

Zn(2+)-binding residues include Cys-71, Cys-73, Cys-86, and Cys-89. Asp-462, Asp-464, and Asp-466 together coordinate Mg(2+). Zn(2+) is bound by residues Cys-811, Cys-885, Cys-892, and Cys-895.

The protein belongs to the RNA polymerase beta' chain family. As to quaternary structure, the RNAP catalytic core consists of 2 alpha, 1 beta, 1 beta' and 1 omega subunit. When a sigma factor is associated with the core the holoenzyme is formed, which can initiate transcription. It depends on Mg(2+) as a cofactor. Requires Zn(2+) as cofactor.

It carries out the reaction RNA(n) + a ribonucleoside 5'-triphosphate = RNA(n+1) + diphosphate. Its function is as follows. DNA-dependent RNA polymerase catalyzes the transcription of DNA into RNA using the four ribonucleoside triphosphates as substrates. The protein is DNA-directed RNA polymerase subunit beta' of Xanthobacter autotrophicus (strain ATCC BAA-1158 / Py2).